We begin with the raw amino-acid sequence, 541 residues long: Ascorbate transporter, chloroplastic (541 aa).

A chloroplast-targeting transit peptide spans 1 to 28 (MALGGLISNRNFGSFIGSGNGCQRLGKS). Transmembrane regions (helical) follow at residues 133–155 (VIVL…MSIA), 170–190 (VGLI…LGGI), 199–219 (VVLG…PIAA), 221–241 (LGLP…GVAM), 263–283 (LVYS…PMLI), 286–306 (FGWP…FLLW), 352–372 (VWAL…LLTW), 390–410 (LLCV…GWIA), 430–450 (IGFL…TPAM), 481–501 (AGVL…FGTA), and 515–535 (VFKV…LFAT).

The protein belongs to the major facilitator superfamily. Sodium/anion cotransporter (TC 2.A.1.14) family. As to expression, expressed in stems, developing siliques, leaf mesophyll cells and sepals of mature flowers. Not detected in roots. Detected in palisade tissue rather than spongy tissue from the leaves.

It is found in the plastid. It localises to the chloroplast inner membrane. Insensitive to dehydroascorbate, p-isoascorbate, inorganic phosphate, glutamate, ATP, p-aminohippuric acid or tetraethylammonium. In terms of biological role, inorganic phosphate and probable anion transporter. Ascorbate transporter bridging the chloroplast envelope. Transports ascorbate from the cytosol into the chloroplast. Requires chloride ions and the presence of an electrochemical potential across the membrane for activity. This chain is Ascorbate transporter, chloroplastic (PHT4;4), found in Arabidopsis thaliana (Mouse-ear cress).